The following is a 360-amino-acid chain: Replication-associated protein (360 aa).

One can recognise a CRESS-DNA virus Rep endonuclease domain in the interval 11-114; sequence SHRNANTFLT…PLAVFERGTF (104 aa). The RCR-1 motif lies at 18–21; sequence FLTY. A divalent metal cation-binding residues include E52, H60, and H62. Positions 60-62 match the RCR-2 motif; sequence HLH. Y100 functions as the For DNA cleavage activity in the catalytic mechanism. The short motif at 100–103 is the RCR-3 element; sequence YILK. E104 serves as a coordination point for a divalent metal cation. An oligomerization region spans residues 175 to 187; sequence SANKLFPEIQEEF. 229 to 236 is a binding site for ATP; the sequence is GPTRTGKS. A transactivation region spans residues 252–270; that stretch reads VDWSSYNEDAIYNIVDDIP. Residues 292-303 carry the Nuclear localization signal motif; it reads KYGKKKKVQKKS.

Belongs to the geminiviridae Rep protein family. Homooligomer. Rep binds to repeated DNA motifs (iterons). Forms the O-complex, which is a Rep-DNA complex involved in the initiation of RCR. Part of the C- and V-complexes which are RepA-Rep-DNA complexes involved in the c-sense and v-sense transcription. It depends on Mg(2+) as a cofactor. The cofactor is Mn(2+).

The protein resides in the host nucleus. In terms of biological role, essential for the replication of viral ssDNA. The closed circular ssDNA genome is first converted to a superhelical dsDNA. Rep binds a specific region at the genome origin of replication. It introduces an endonucleolytic nick within the conserved sequence 5'-TAATATTAC-3' in the intergenic region of the genome present in all geminiviruses, thereby initiating the rolling circle replication (RCR). Following cleavage, binds covalently to the 5'-phosphate of DNA as a tyrosyl ester. The cleavage gives rise to a free 3'-OH that serves as a primer for the cellular DNA polymerase. The polymerase synthesizes the (+) strand DNA by rolling circle mechanism. After one round of replication, a Rep-catalyzed nucleotidyl transfer reaction releases a circular single-stranded virus genome, thereby terminating the replication. Displays origin-specific DNA cleavage, nucleotidyl transferase, ATPase and helicase activities. Acts as an inhibitor of C-sense gene transcription. The sequence is that of Replication-associated protein from Maize streak virus genotype A (isolate Nigeria) (MSV).